Consider the following 231-residue polypeptide: Flagellar L-ring protein (231 aa).

The N-terminal stretch at 1-18 (MKRFVSVVALSGVVSLAG) is a signal peptide. The N-palmitoyl cysteine moiety is linked to residue Cys-19. Cys-19 is lipidated: S-diacylglycerol cysteine.

The protein belongs to the FlgH family. In terms of assembly, the basal body constitutes a major portion of the flagellar organelle and consists of four rings (L,P,S, and M) mounted on a central rod.

The protein localises to the cell outer membrane. It is found in the bacterial flagellum basal body. Its function is as follows. Assembles around the rod to form the L-ring and probably protects the motor/basal body from shearing forces during rotation. The chain is Flagellar L-ring protein from Pseudomonas fluorescens (strain Pf0-1).